The following is a 391-amino-acid chain: Phosphoglycerate kinase (391 aa).

Residues Asp21 to Asn23, Arg36, His59 to Arg62, Arg113, and Arg146 each bind substrate. ATP is bound by residues Lys197, Glu319, and Gly345 to Thr348.

Belongs to the phosphoglycerate kinase family. Monomer.

It localises to the cytoplasm. The enzyme catalyses (2R)-3-phosphoglycerate + ATP = (2R)-3-phospho-glyceroyl phosphate + ADP. It functions in the pathway carbohydrate degradation; glycolysis; pyruvate from D-glyceraldehyde 3-phosphate: step 2/5. This Xanthomonas euvesicatoria pv. vesicatoria (strain 85-10) (Xanthomonas campestris pv. vesicatoria) protein is Phosphoglycerate kinase.